Here is a 354-residue protein sequence, read N- to C-terminus: 5,10-methenyltetrahydromethanopterin hydrogenase (354 aa).

It belongs to the HMD family.

The enzyme catalyses 5,10-methenyl-5,6,7,8-tetrahydromethanopterin + H2 = 5,10-methylenetetrahydromethanopterin + H(+). The protein operates within one-carbon metabolism; methanogenesis from CO(2); 5,10-methylene-5,6,7,8-tetrahydromethanopterin from 5,10-methenyl-5,6,7,8-tetrahydromethanopterin (hydrogen route): step 1/1. In terms of biological role, catalyzes the reversible reduction of methenyl-H(4)MPT(+) to methylene-H(4)MPT. The chain is 5,10-methenyltetrahydromethanopterin hydrogenase from Methanococcus vannielii (strain ATCC 35089 / DSM 1224 / JCM 13029 / OCM 148 / SB).